We begin with the raw amino-acid sequence, 200 residues long: Ribonuclease HII (200 aa).

In terms of domain architecture, RNase H type-2 spans 9-198; that stretch reads ALIAGVDEVG…VQRVLAQAKG (190 aa). Positions 15, 16, and 107 each coordinate a divalent metal cation.

This sequence belongs to the RNase HII family. The cofactor is Mn(2+). Mg(2+) is required as a cofactor.

The protein resides in the cytoplasm. It carries out the reaction Endonucleolytic cleavage to 5'-phosphomonoester.. Endonuclease that specifically degrades the RNA of RNA-DNA hybrids. The sequence is that of Ribonuclease HII from Pseudoalteromonas translucida (strain TAC 125).